A 333-amino-acid chain; its full sequence is NADH-quinone oxidoreductase subunit H (333 aa).

The next 8 helical transmembrane spans lie at Phe-15–Tyr-35, Phe-88–Phe-108, Ile-117–Thr-137, Ile-159–Leu-179, Val-191–Glu-211, Trp-239–Val-259, Ile-274–Val-296, and Val-313–Phe-333.

Belongs to the complex I subunit 1 family. NDH-1 is composed of 14 different subunits. Subunits NuoA, H, J, K, L, M, N constitute the membrane sector of the complex.

It localises to the cell membrane. The catalysed reaction is a quinone + NADH + 5 H(+)(in) = a quinol + NAD(+) + 4 H(+)(out). NDH-1 shuttles electrons from NADH, via FMN and iron-sulfur (Fe-S) centers, to quinones in the respiratory chain. The immediate electron acceptor for the enzyme in this species is believed to be ubiquinone. Couples the redox reaction to proton translocation (for every two electrons transferred, four hydrogen ions are translocated across the cytoplasmic membrane), and thus conserves the redox energy in a proton gradient. This subunit may bind ubiquinone. This Bacillus thuringiensis subsp. konkukian (strain 97-27) protein is NADH-quinone oxidoreductase subunit H.